The primary structure comprises 150 residues: Large ribosomal subunit protein bL9 (150 aa).

It belongs to the bacterial ribosomal protein bL9 family.

Binds to the 23S rRNA. In Shewanella loihica (strain ATCC BAA-1088 / PV-4), this protein is Large ribosomal subunit protein bL9.